The following is a 110-amino-acid chain: Large ribosomal subunit protein P2C (110 aa).

The segment at 83-110 is disordered; the sequence is APAAEEAAKEEAKEEEESDEDMGFGLFD. Residues 95-104 show a composition bias toward acidic residues; it reads KEEEESDEDM. Serine 100 bears the Phosphoserine mark.

It belongs to the eukaryotic ribosomal protein P1/P2 family. Component of the large ribosomal subunit (LSU). Mature yeast ribosomes consist of a small (40S) and a large (60S) subunit. The 40S small subunit contains 1 molecule of ribosomal RNA (18S rRNA) and at least 33 different proteins. The large 60S subunit contains 3 rRNA molecules (25S, 5.8S and 5S rRNA) and at least 46 different proteins. The acidic ribosomal P-proteins form the stalk structure of the 60S subunit. They are organized as a pentameric complex in which uL10/P0 interacts with 2 heterodimers of P1 and P2 proteins.

Its subcellular location is the cytoplasm. Functionally, component of the ribosome, a large ribonucleoprotein complex responsible for the synthesis of proteins in the cell. The small ribosomal subunit (SSU) binds messenger RNAs (mRNAs) and translates the encoded message by selecting cognate aminoacyl-transfer RNA (tRNA) molecules. The large subunit (LSU) contains the ribosomal catalytic site termed the peptidyl transferase center (PTC), which catalyzes the formation of peptide bonds, thereby polymerizing the amino acids delivered by tRNAs into a polypeptide chain. The nascent polypeptides leave the ribosome through a tunnel in the LSU and interact with protein factors that function in enzymatic processing, targeting, and the membrane insertion of nascent chains at the exit of the ribosomal tunnel. The chain is Large ribosomal subunit protein P2C (rpp203) from Schizosaccharomyces pombe (strain 972 / ATCC 24843) (Fission yeast).